Reading from the N-terminus, the 241-residue chain is Putative hydrolase 080R (241 aa).

The Nudix hydrolase domain occupies 50–241 (FPDLSFNLMV…VIKVQKIMIL (192 aa)). Residues 136–157 (GHCNGNEPVLSTLLREFREETT) carry the Nudix box motif. 3 residues coordinate Mg(2+): Glu-151, Glu-155, and Asp-204.

The protein belongs to the Nudix hydrolase family.

This Aedes vexans (Inland floodwater mosquito) protein is Putative hydrolase 080R.